The following is a 601-amino-acid chain: Probable N-acetylgalactosaminyltransferase 7 (601 aa).

The Cytoplasmic portion of the chain corresponds to 1 to 20; the sequence is MIIARKKLQLQRLWRQRGCR. A helical; Signal-anchor for type II membrane protein transmembrane segment spans residues 21–38; that stretch reads VATYICLGVLVLFGFVYN. The Lumenal segment spans residues 39 to 601; that stretch reads SKGNSMSSIK…FVWKEFYQSS (563 aa). Positions 61 to 108 are disordered; the sequence is DLTNKELPGGPDPNTIFRGSELGNYEPKEPEIPSNQPGEHGKPVPVTD. N-linked (GlcNAc...) asparagine glycosylation is present at Asn-135. 5 disulfide bridges follow: Cys-146–Cys-382, Cys-373–Cys-452, Cys-490–Cys-506, Cys-529–Cys-542, and Cys-568–Cys-583. Residues 155-265 form a catalytic subdomain A region; it reads LPTVSVVVVF…TNWLPPLLAP (111 aa). The substrate site is built by Asp-196 and Arg-226. Positions 249 and 251 each coordinate Mn(2+). Residues 328 to 390 are catalytic subdomain B; the sequence is PFRSPTHAGG…PCSHVGHVYR (63 aa). Position 359 (Trp-359) interacts with substrate. Mn(2+) is bound at residue His-387. Residues Arg-390 and Tyr-395 each contribute to the substrate site. The Ricin B-type lectin domain occupies 477 to 595; the sequence is DVWGEARNPA…DNERQKFVWK (119 aa).

The protein belongs to the glycosyltransferase 2 family. GalNAc-T subfamily. It depends on Mn(2+) as a cofactor.

The protein resides in the golgi apparatus membrane. The protein operates within protein modification; protein glycosylation. In terms of biological role, probable glycopeptide transferase involved in O-linked oligosaccharide biosynthesis. Glycopeptide transferases catalyze the transfer of an N-acetyl-D-galactosamine residue to an already glycosylated peptide. In contrast to other members of the family, it does not act as a peptide transferase that transfers GalNAc onto serine or threonine residue on peptides that have been tested. Some peptide transferase activity is however not excluded, considering that its appropriate peptide substrate may remain unidentified. The chain is Probable N-acetylgalactosaminyltransferase 7 (gly-7) from Caenorhabditis elegans.